The sequence spans 397 residues: CCA-adding enzyme (397 aa).

The ATP site is built by G26 and R29. CTP-binding residues include G26 and R29. Mg(2+) is bound by residues D39 and D41. 5 residues coordinate ATP: R110, D153, R156, R159, and R162. CTP-binding residues include R110, D153, R156, R159, and R162.

The protein belongs to the tRNA nucleotidyltransferase/poly(A) polymerase family. Bacterial CCA-adding enzyme type 3 subfamily. In terms of assembly, homodimer. The cofactor is Mg(2+).

It catalyses the reaction a tRNA precursor + 2 CTP + ATP = a tRNA with a 3' CCA end + 3 diphosphate. The catalysed reaction is a tRNA with a 3' CCA end + 2 CTP + ATP = a tRNA with a 3' CCACCA end + 3 diphosphate. In terms of biological role, catalyzes the addition and repair of the essential 3'-terminal CCA sequence in tRNAs without using a nucleic acid template. Adds these three nucleotides in the order of C, C, and A to the tRNA nucleotide-73, using CTP and ATP as substrates and producing inorganic pyrophosphate. tRNA 3'-terminal CCA addition is required both for tRNA processing and repair. Also involved in tRNA surveillance by mediating tandem CCA addition to generate a CCACCA at the 3' terminus of unstable tRNAs. While stable tRNAs receive only 3'-terminal CCA, unstable tRNAs are marked with CCACCA and rapidly degraded. The protein is CCA-adding enzyme of Bacillus cereus (strain 03BB102).